The primary structure comprises 455 residues: MPTWEELYKNAIEKAIKSVPKVKGVLLGYNTNIDAIKYLDSKDLEERIIKAGKEEVIKYSEELPDKINTVSQLLGSILWSIRRGKAAELFVESCPVRFYMKRWGWNELRMGGQAGIMANLLGGVYGVPVIVHVPQLSRLQANLFLDGPIYVPTLENGEVKLIHPKEFSGDEENCIHYIYEFPRGFRVFEFEAPRENRFIGSADDYNTTLFIREEFRESFSEVIKNVQLAILSGLQALTKENYKEPFEIVKSNLEVLNEREIPVHLEFAFTPDEKVREEILNVLGMFYSVGLNEVELASIMEILGEKKLAKELLAHDPVDPIAVTEAMLKLAKKTGVKRIHFHTYGYYLALTEYKGEHVRDALLFAALAAAAKAMKGNITSLEEIREATSVPVNEKATQVEEKLRAEYGIKEGIGEVEGYQIAFIPTKIVAKPKSTVGIGDTISSSAFIGEFSFTL.

The ADPK domain maps to 2-455 (PTWEELYKNA…AFIGEFSFTL (454 aa)). D-glucose-binding positions include D34, E88, 112 to 113 (GQ), and H176. E195 serves as a coordination point for ADP. Residue E266 coordinates Mg(2+). N292 lines the ADP pocket. E295 provides a ligand contact to Mg(2+). ADP-binding positions include 342–343 (HT), V429, and G439. D-glucose is bound at residue D440. D440 is a Mg(2+) binding site. D440 (proton acceptor) is an active-site residue.

It belongs to the ADP-dependent glucokinase family. Homodimer. It depends on Mg(2+) as a cofactor.

It localises to the cytoplasm. It catalyses the reaction D-glucose + ADP = D-glucose 6-phosphate + AMP + H(+). It carries out the reaction D-glucosamine + ADP = D-glucosamine 6-phosphate + AMP + H(+). Its pathway is carbohydrate degradation; glycolysis. In terms of biological role, catalyzes the ADP-dependent phosphorylation of D-glucose to D-glucose 6-phosphate and glucosamine to glucosamine 6-phosphate. Can also use CDP as the phosphoryl group donor and D-1,5-anhydroglucitol as the phosphoryl group acceptor. The sequence is that of ADP-dependent glucose/glucosamine kinase from Pyrococcus furiosus (strain ATCC 43587 / DSM 3638 / JCM 8422 / Vc1).